A 134-amino-acid polypeptide reads, in one-letter code: Z-ring associated protein G (134 aa).

The chain crosses the membrane as a helical span at residues 7–27 (EIWVAIGIAFIVGLFIGYIIV). The interval 107-134 (ATDKSQNEQPRDYSEGASGLFKENKEEN) is disordered. Over residues 111-120 (SQNEQPRDYS) the composition is skewed to basic and acidic residues.

The protein belongs to the ZapG family.

It is found in the cell inner membrane. In terms of biological role, involved in cell division, cell envelope biogenesis and cell shape maintenance. This chain is Z-ring associated protein G, found in Haemophilus influenzae (strain ATCC 51907 / DSM 11121 / KW20 / Rd).